A 320-amino-acid polypeptide reads, in one-letter code: ATP-dependent 6-phosphofructokinase isozyme 1 (320 aa).

Residue Gly-12 participates in ATP binding. Residues Arg-22–Arg-26 and Arg-55–Asp-60 contribute to the ADP site. ATP is bound by residues Arg-73–Phe-74 and Gly-103–Ser-106. Asp-104 contacts Mg(2+). Thr-126–Asp-128 serves as a coordination point for substrate. Residue Asp-128 is the Proton acceptor of the active site. Arg-155 is a binding site for ADP. Substrate contacts are provided by residues Arg-163 and Met-170–Arg-172. ADP-binding positions include Gly-186–Glu-188, Lys-212, and Lys-214–His-216. Residues Glu-223, Arg-244, and His-250 to Arg-253 each bind substrate.

This sequence belongs to the phosphofructokinase type A (PFKA) family. ATP-dependent PFK group I subfamily. Prokaryotic clade 'B1' sub-subfamily. As to quaternary structure, homotetramer. The cofactor is Mg(2+).

The protein resides in the cytoplasm. It carries out the reaction beta-D-fructose 6-phosphate + ATP = beta-D-fructose 1,6-bisphosphate + ADP + H(+). Its pathway is carbohydrate degradation; glycolysis; D-glyceraldehyde 3-phosphate and glycerone phosphate from D-glucose: step 3/4. Allosterically activated by ADP and other diphosphonucleosides, and allosterically inhibited by phosphoenolpyruvate. Its function is as follows. Catalyzes the phosphorylation of D-fructose 6-phosphate to fructose 1,6-bisphosphate by ATP, the first committing step of glycolysis. This chain is ATP-dependent 6-phosphofructokinase isozyme 1, found in Shigella boydii serotype 18 (strain CDC 3083-94 / BS512).